A 320-amino-acid chain; its full sequence is D-alanine--D-alanine ligase (320 aa).

Positions K101 to S317 constitute an ATP-grasp domain. I148–T203 is a binding site for ATP. Positions 271, 284, and 286 each coordinate Mg(2+).

This sequence belongs to the D-alanine--D-alanine ligase family. Requires Mg(2+) as cofactor. The cofactor is Mn(2+).

The protein resides in the cytoplasm. The catalysed reaction is 2 D-alanine + ATP = D-alanyl-D-alanine + ADP + phosphate + H(+). It functions in the pathway cell wall biogenesis; peptidoglycan biosynthesis. Cell wall formation. This chain is D-alanine--D-alanine ligase, found in Hamiltonella defensa subsp. Acyrthosiphon pisum (strain 5AT).